Reading from the N-terminus, the 546-residue chain is MPVGSRQNRVQAVRKVSGSTDSTIPREAGIYPIRYTERKERKDVQTVENGTNEDSRASQSRGRRRRQPTSRTLRQTSQSRPEVLERNESGSDCKKGVHSHSSARKVEREGSRCASRGLHLSSTTRCTAXELDVAKQEEKEEEDNKEGYADEEQKIENSTQERKVVNTSMEDKATSHSTKGSFRLTNSDSNKELHKAIKVRGSLSKTDITEKAKFVNEVVEKEIISQVFKIDNRFTFDILHAGSYYERLKVGEADEFDIMVQLNAAKLSNIFQPRFCVARRHSRHLVGFAYLEYQSHFDGHKKWEDLLETGGPDSRPLLSPKLILEHFKELLSQRLHQINCVGKQPWRSYCEPSLHGPAVKLTFCLANDKTLDIDVVLCIQSQHWPPVANNWGVLNPLQWPGAQQVENIKKRGCHVVPKVNPRDQKCWRTSFSLAEKDLLSPKSIDEDKEHYKIVKVIFERHKASLEPLCSYHLKTLFLWLRSDGNWTEKRTQFKVIEYFIQQLLEKVRMKELPHFFIGHNLNLFSDLSDAQVTNITTCLKEIIKNK.

The segment covering M1–V10 has biased composition (polar residues). Disordered regions lie at residues M1–R116 and A134–N186. Residues Y35–Q45 are compositionally biased toward basic and acidic residues. Positions T69–R80 are enriched in low complexity. Basic and acidic residues-rich tracts occupy residues E82 to K95 and K145 to T174. A compositionally biased stretch (polar residues) spans S175 to N186. Residues S243 and E255 to D257 each bind ATP. Mg(2+) is bound by residues E255, D257, and D374. GTP contacts are provided by residues D374 and R428–E435. ATP-binding positions include S432–E435, K455, and S470–K474.

This sequence belongs to the mab-21 family. Requires Mg(2+) as cofactor. The cofactor is Mn(2+).

The catalysed reaction is GTP + ATP = 2',3'-cGAMP + 2 diphosphate. The enzyme catalyses GTP + ATP = pppGp(2'-5')A + diphosphate. It catalyses the reaction pppGp(2'-5')A = 2',3'-cGAMP + diphosphate. Nucleotidyltransferase that catalyzes the formation of cyclic GMP-AMP (2',3'-cGAMP) from ATP and GTP and plays a key role in innate immunity. Directly binds some unknown ligand, activating the nucleotidyltransferase activity, leading to synthesis of 2',3'-cGAMP, a second messenger that binds to and activates Sting, thereby triggering the immune response via activation of the NF-kappa-B transcription factor. In Exaiptasia diaphana (Tropical sea anemone), this protein is Cyclic GMP-AMP synthase-like receptor.